We begin with the raw amino-acid sequence, 287 residues long: Proline iminopeptidase (287 aa).

Residues 22–271 enclose the AB hydrolase-1 domain; sequence PLVLLHGGPG…RSRHMAFIDE (250 aa). The active-site Nucleophile is the Ser98. Residue Asp238 is part of the active site. His265 serves as the catalytic Proton donor.

This sequence belongs to the peptidase S33 family.

Its subcellular location is the cell envelope. It carries out the reaction Release of N-terminal proline from a peptide.. In terms of biological role, releases the N-terminal proline from various substrates. This Lactiplantibacillus plantarum (strain ATCC BAA-793 / NCIMB 8826 / WCFS1) (Lactobacillus plantarum) protein is Proline iminopeptidase.